The primary structure comprises 72 residues: Putative D-serine transporter DsdX-like protein (72 aa).

The protein is Putative D-serine transporter DsdX-like protein (dsdX) of Escherichia coli O157:H7.